We begin with the raw amino-acid sequence, 152 residues long: UPF0178 protein YaiI (152 aa).

It belongs to the UPF0178 family.

The protein is UPF0178 protein YaiI of Escherichia coli O17:K52:H18 (strain UMN026 / ExPEC).